The primary structure comprises 236 residues: Protein YIPF6 (236 aa).

A2 carries the post-translational modification N-acetylalanine. Residues 2 to 84 (AEAVESPGDP…HVLYPRKSNT (83 aa)) lie on the Cytoplasmic side of the membrane. Position 7 is a phosphoserine (S7). The chain crosses the membrane as a helical span at residues 85–105 (LLRDWDLWGPLILCVTLALML). Residues 106 to 115 (QRGSVDSEKD) are Lumenal-facing. A helical transmembrane segment spans residues 116 to 136 (GGPQFAEVFVIVWFGAVTITL). Residues 137-146 (NSKLLGGNIS) lie on the Cytoplasmic side of the membrane. A helical membrane pass occupies residues 147 to 167 (FFQSLCVLGYCILPLTMAMLV). Residues 168–184 (CRLVLLAEPGPVNFMVR) are Lumenal-facing. A helical transmembrane segment spans residues 185–205 (LFVVIIMFAWSIVASTAFLAD). The Cytoplasmic portion of the chain corresponds to 206–212 (SQPPNRK). Residues 213 to 233 (ALAVYPVFLFYFVISWMILTF) traverse the membrane as a helical segment. The Lumenal segment spans residues 234-236 (TPQ).

Belongs to the YIP1 family. As to quaternary structure, predominantly interacts with YIPF1 or YIPF2, but may also form a ternary complex with YIPF1 and YIPF2. This interaction may stabilize YIPF1 and YIPF2.

It localises to the golgi apparatus membrane. In terms of biological role, may be required for stable YIPF1 and YIPF2 protein expression. This is Protein YIPF6 (YIPF6) from Bos taurus (Bovine).